We begin with the raw amino-acid sequence, 499 residues long: Na(+)/H(+) antiporter NhaB (499 aa).

A run of 11 helical transmembrane segments spans residues 33–53 (PVIF…EFIF), 66–86 (PGGL…HTVY), 89–109 (VSGN…IYFM), 128–148 (AILS…LDAL), 237–257 (FIEF…AGLI), 305–325 (AIVA…VGLI), 326–346 (GLTV…HQIG), 349–369 (FEEA…VGVI), 393–413 (MFFI…VATV), 449–469 (ATPN…APLI), and 477–497 (VWMA…MIVI).

This sequence belongs to the NhaB Na(+)/H(+) (TC 2.A.34) antiporter family.

It localises to the cell inner membrane. It catalyses the reaction 2 Na(+)(in) + 3 H(+)(out) = 2 Na(+)(out) + 3 H(+)(in). Its function is as follows. Na(+)/H(+) antiporter that extrudes sodium in exchange for external protons. The protein is Na(+)/H(+) antiporter NhaB of Hahella chejuensis (strain KCTC 2396).